We begin with the raw amino-acid sequence, 127 residues long: Fluoride-specific ion channel FluC (127 aa).

A run of 4 helical transmembrane segments spans residues 4–24 (LLLVAAGGAVGSVARYLVGVG), 36–56 (GTFTVNVVGGFLMGCLASWLA), 72–92 (VGVLGGFTTFSSFSLETALMI), and 101–121 (FTYSAASVLLAIAALFAGLLV). 2 residues coordinate Na(+): G76 and T79.

The protein belongs to the fluoride channel Fluc/FEX (TC 1.A.43) family.

It is found in the cell inner membrane. The catalysed reaction is fluoride(in) = fluoride(out). With respect to regulation, na(+) is not transported, but it plays an essential structural role and its presence is essential for fluoride channel function. In terms of biological role, fluoride-specific ion channel. Important for reducing fluoride concentration in the cell, thus reducing its toxicity. This is Fluoride-specific ion channel FluC from Caulobacter vibrioides (strain ATCC 19089 / CIP 103742 / CB 15) (Caulobacter crescentus).